Consider the following 289-residue polypeptide: Probable endonuclease 4 (289 aa).

The Zn(2+) site is built by His-75, His-115, Glu-153, Asp-187, His-190, His-224, Asp-237, His-239, and Glu-269.

Belongs to the AP endonuclease 2 family. The cofactor is Zn(2+).

It catalyses the reaction Endonucleolytic cleavage to 5'-phosphooligonucleotide end-products.. Its function is as follows. Endonuclease IV plays a role in DNA repair. It cleaves phosphodiester bonds at apurinic or apyrimidinic (AP) sites, generating a 3'-hydroxyl group and a 5'-terminal sugar phosphate. This Chlamydia abortus (strain DSM 27085 / S26/3) (Chlamydophila abortus) protein is Probable endonuclease 4.